The chain runs to 469 residues: Citrate synthase, mitochondrial (469 aa).

The transit peptide at 1–30 (MSFLSVSRLAPKLLNSKNATYFLVAARNAS) directs the protein to the mitochondrion. Catalysis depends on residues His-304 and His-350. Arg-359 is a binding site for oxaloacetate. Asp-405 is a catalytic residue. The oxaloacetate site is built by Arg-431 and Arg-451.

This sequence belongs to the citrate synthase family. In terms of assembly, homodimer.

The protein localises to the mitochondrion matrix. It carries out the reaction oxaloacetate + acetyl-CoA + H2O = citrate + CoA + H(+). Its pathway is carbohydrate metabolism; tricarboxylic acid cycle; isocitrate from oxaloacetate: step 1/2. Key enzyme of the Krebs tricarboxylic acid cycle which catalyzes the synthesis of citrate from acetyl coenzyme A and oxaloacetate. In Katsuwonus pelamis (Skipjack tuna), this protein is Citrate synthase, mitochondrial (cs).